A 146-amino-acid polypeptide reads, in one-letter code: Hemoglobin subunit beta (146 aa).

The residue at position 1 (Val-1) is an N-acetylvaline. The Globin domain maps to 2-146; that stretch reads HLTPEEKTAV…VANALAHKYH (145 aa). Thr-12 carries the phosphothreonine modification. A Phosphoserine modification is found at Ser-44. An N6-acetyllysine modification is found at Lys-59. His-63 is a binding site for heme b. Lys-82 carries the N6-acetyllysine modification. His-92 lines the heme b pocket. Residue Cys-93 is modified to S-nitrosocysteine. Lys-144 bears the N6-acetyllysine mark.

It belongs to the globin family. In terms of assembly, heterotetramer of two alpha chains and two beta chains. In terms of tissue distribution, red blood cells.

Involved in oxygen transport from the lung to the various peripheral tissues. The polypeptide is Hemoglobin subunit beta (HBB) (Mandrillus sphinx (Mandrill)).